The primary structure comprises 1152 residues: DNA-directed RNA polymerase subunit beta' (1152 aa).

4 residues coordinate Zn(2+): C60, C62, C75, and C78. 3 residues coordinate Mg(2+): D449, D451, and D453. Residues C779, C853, C860, and C863 each contribute to the Zn(2+) site.

The protein belongs to the RNA polymerase beta' chain family. In terms of assembly, the RNAP catalytic core consists of 2 alpha, 1 beta, 1 beta' and 1 omega subunit. When a sigma factor is associated with the core the holoenzyme is formed, which can initiate transcription. The cofactor is Mg(2+). Zn(2+) serves as cofactor.

It carries out the reaction RNA(n) + a ribonucleoside 5'-triphosphate = RNA(n+1) + diphosphate. In terms of biological role, DNA-dependent RNA polymerase catalyzes the transcription of DNA into RNA using the four ribonucleoside triphosphates as substrates. The sequence is that of DNA-directed RNA polymerase subunit beta' from Carboxydothermus hydrogenoformans (strain ATCC BAA-161 / DSM 6008 / Z-2901).